A 76-amino-acid chain; its full sequence is AKVTEKSWQPQTTSTKRWKKRKTPSQPRSRGKVRKIYKKVKRPLHVCSRKKYSPKVITTSRRQKRARRANKFETIP.

Positions 1–11 are enriched in polar residues; it reads AKVTEKSWQPQ. 2 disordered regions span residues 1–34 and 56–76; these read AKVTEKSWQPQTTSTKRWKKRKTPSQPRSRGKVR and VITTSRRQKRARRANKFETIP. Basic residues predominate over residues 16 to 34; it reads KRWKKRKTPSQPRSRGKVR.

It localises to the nucleus. The protein localises to the chromosome. In terms of biological role, involved in nuclear basic protein transition: histones are replaced by spermatid specific proteins which are themselves replaced by protamines in late spermatids. This chain is Spermatid nuclear transition protein 3 (TNP3), found in Sus scrofa (Pig).